Reading from the N-terminus, the 789-residue chain is Ent-kaurene synthase TSP4, chloroplastic (789 aa).

Mg(2+)-binding residues include aspartate 540 and aspartate 544. The DDXXD motif motif lies at 540–544; sequence DDFFD. The chain crosses the membrane as a helical span at residues 638 to 656; that stretch reads AYVSFALGPIVLPALYLVG. Positions 684, 687, and 692 each coordinate Mg(2+).

Belongs to the terpene synthase family. Mg(2+) serves as cofactor. As to expression, expressed in leaves and fruits, including trichomes.

Its subcellular location is the plastid. It localises to the chloroplast membrane. The catalysed reaction is ent-copalyl diphosphate = ent-kaur-16-ene + diphosphate. Its pathway is plant hormone biosynthesis; gibberellin biosynthesis. In terms of biological role, involved in the biosynthesis of labdane-type diterpenoid including cleroda-dienols, and peregrinol lactones and furan derivatives, dopaminergic diterpenoids that can bind to dopamine receptors in the human pituitary gland, have probably ability to lower prolactin levels, and are used to treat menstrual cycle disorders (e.g. premenstrual syndrome and mastodynia). Terpene synthase that produces ent-kaurene from ent-copalyl diphosphate. This is Ent-kaurene synthase TSP4, chloroplastic from Vitex agnus-castus (Chaste tree).